Consider the following 446-residue polypeptide: tRNA-2-methylthio-N(6)-dimethylallyladenosine synthase (446 aa).

An MTTase N-terminal domain is found at 3-124 (KKLYIKTYGC…LPELISKVVR (122 aa)). The [4Fe-4S] cluster site is built by Cys12, Cys48, Cys87, Cys162, Cys166, and Cys169. In terms of domain architecture, Radical SAM core spans 148-380 (YPQGASSFIS…QKELAAQQLA (233 aa)). The region spanning 383–446 (ESCIGSTMKV…LNSLSGEIYR (64 aa)) is the TRAM domain.

It belongs to the methylthiotransferase family. MiaB subfamily. Monomer. [4Fe-4S] cluster is required as a cofactor.

Its subcellular location is the cytoplasm. It carries out the reaction N(6)-dimethylallyladenosine(37) in tRNA + (sulfur carrier)-SH + AH2 + 2 S-adenosyl-L-methionine = 2-methylsulfanyl-N(6)-dimethylallyladenosine(37) in tRNA + (sulfur carrier)-H + 5'-deoxyadenosine + L-methionine + A + S-adenosyl-L-homocysteine + 2 H(+). In terms of biological role, catalyzes the methylthiolation of N6-(dimethylallyl)adenosine (i(6)A), leading to the formation of 2-methylthio-N6-(dimethylallyl)adenosine (ms(2)i(6)A) at position 37 in tRNAs that read codons beginning with uridine. This Rickettsia bellii (strain RML369-C) protein is tRNA-2-methylthio-N(6)-dimethylallyladenosine synthase.